Here is a 70-residue protein sequence, read N- to C-terminus: Toxin Isom2 (70 aa).

The LCN-type CS-alpha/beta domain maps to 2 to 65 (KNGYAVDSSG…ISDTRKKYCD (64 aa)). Cystine bridges form between cysteine 16–cysteine 37, cysteine 22–cysteine 42, cysteine 26–cysteine 44, and cysteine 38–cysteine 64.

In terms of tissue distribution, expressed by the venom gland.

It localises to the secreted. Functionally, excitatory insect beta-toxins induce a spastic paralysis. They bind voltage-independently at site-4 of sodium channels (Nav) and shift the voltage of activation toward more negative potentials thereby affecting sodium channel activation and promoting spontaneous and repetitive firing. This Isometrus vittatus (Bark scorpion) protein is Toxin Isom2.